Here is a 216-residue protein sequence, read N- to C-terminus: Large ribosomal subunit protein uL24m (216 aa).

A mitochondrion-targeting transit peptide spans 1-9 (MRLSALLAL). Ser-24 is subject to Phosphoserine. In terms of domain architecture, KOW spans 56-89 (LFCGDMVEILEGKDAGKQGKVVQVVRQRNWVVLE).

It belongs to the universal ribosomal protein uL24 family. In terms of assembly, component of the mitochondrial ribosome large subunit (39S) which comprises a 16S rRNA and about 50 distinct proteins.

Its subcellular location is the mitochondrion. This is Large ribosomal subunit protein uL24m (Mrpl24) from Mus musculus (Mouse).